Reading from the N-terminus, the 552-residue chain is Serine palmitoyltransferase 3 (552 aa).

The tract at residues 1 to 29 is disordered; it reads MANPGGGAVCNGKLHNHKKQSNGSQSRNC. Residues 59–79 traverse the membrane as a helical segment; it reads PLHVMVFTYMGYGIGTLFGYL. At Lys371 the chain carries N6-(pyridoxal phosphate)lysine.

Belongs to the class-II pyridoxal-phosphate-dependent aminotransferase family. Component of the serine palmitoyltransferase (SPT) complex, which is composed of SPTLC1, SPTLC2 or SPTLC3 and SPTSSA or SPTSSB. The heterodimer consisting of SPTLC1 and SPTLC2/SPTLC3 forms the catalytic core of the enzyme, while SPTSSA or SPTSSB subunits determine substrate specificity. SPT also interacts with ORMDL proteins, especially ORMDL3, which negatively regulate SPT activity in the presence of ceramides. The cofactor is pyridoxal 5'-phosphate. Expressed in most tissues, except peripheral blood cells and bone marrow, with highest levels in heart, kidney, liver, uterus and skin.

It localises to the endoplasmic reticulum membrane. The enzyme catalyses L-serine + hexadecanoyl-CoA + H(+) = 3-oxosphinganine + CO2 + CoA. It catalyses the reaction dodecanoyl-CoA + L-serine + H(+) = 3-oxotetradecasphinganine + CO2 + CoA. The catalysed reaction is tetradecanoyl-CoA + L-serine + H(+) = 3-oxohexadecasphinganine + CO2 + CoA. It carries out the reaction octadecanoyl-CoA + L-serine + H(+) = 3-oxoeicosasphinganine + CO2 + CoA. It functions in the pathway lipid metabolism; sphingolipid metabolism. Its activity is regulated as follows. SPT complex catalytic activity is negatively regulated by ORMDL proteins, including ORMDL3, in the presence of ceramides. This mechanism allows to maintain ceramide levels at sufficient concentrations for the production of complex sphingolipids, but which prevents the accumulation of ceramides to levels that trigger apoptosis. Functionally, component of the serine palmitoyltransferase multisubunit enzyme (SPT) that catalyzes the initial and rate-limiting step in sphingolipid biosynthesis by condensing L-serine and activated acyl-CoA (most commonly palmitoyl-CoA) to form long-chain bases. The SPT complex is composed of SPTLC1, SPTLC2 or SPTLC3 and SPTSSA or SPTSSB. Within this complex, the heterodimer consisting of SPTLC1 and SPTLC2/SPTLC3 forms the catalytic core. The composition of the serine palmitoyltransferase (SPT) complex determines the substrate preference. The SPTLC1-SPTLC2-SPTSSA complex shows a strong preference for C16-CoA substrate, while the SPTLC1-SPTLC3-SPTSSA isozyme uses both C14-CoA and C16-CoA as substrates, with a slight preference for C14-CoA. The SPTLC1-SPTLC2-SPTSSB complex shows a strong preference for C18-CoA substrate, while the SPTLC1-SPTLC3-SPTSSB isozyme displays an ability to use a broader range of acyl-CoAs, without apparent preference. This chain is Serine palmitoyltransferase 3, found in Homo sapiens (Human).